We begin with the raw amino-acid sequence, 256 residues long: Pimeloyl-[acyl-carrier protein] methyl ester esterase (256 aa).

The 225-residue stretch at 16–240 folds into the AB hydrolase-1 domain; the sequence is LVILHGWGVN…PKASHAPFLS (225 aa). Substrate contacts are provided by residues Trp22, 80–81, and 143–147; these read SL and FLAIQ. Catalysis depends on Ser80, which acts as the Nucleophile. Active-site residues include Asp207 and His235. His235 lines the substrate pocket.

The protein belongs to the AB hydrolase superfamily. Carboxylesterase BioH family. Monomer.

The protein localises to the cytoplasm. It carries out the reaction 6-carboxyhexanoyl-[ACP] methyl ester + H2O = 6-carboxyhexanoyl-[ACP] + methanol + H(+). It participates in cofactor biosynthesis; biotin biosynthesis. Functionally, the physiological role of BioH is to remove the methyl group introduced by BioC when the pimeloyl moiety is complete. It allows to synthesize pimeloyl-ACP via the fatty acid synthetic pathway through the hydrolysis of the ester bonds of pimeloyl-ACP esters. The polypeptide is Pimeloyl-[acyl-carrier protein] methyl ester esterase (Shewanella woodyi (strain ATCC 51908 / MS32)).